The sequence spans 392 residues: Queuine tRNA-ribosyltransferase (392 aa).

The active-site Proton acceptor is Asp93. Substrate contacts are provided by residues 93-97, Asp147, Gln189, and Gly216; that span reads DSGGY. Residues 247–253 form an RNA binding region; the sequence is GVGAPED. The active-site Nucleophile is the Asp266. The RNA binding; important for wobble base 34 recognition stretch occupies residues 271–275; the sequence is TRVAR. Positions 304, 306, 309, and 335 each coordinate Zn(2+).

This sequence belongs to the queuine tRNA-ribosyltransferase family. As to quaternary structure, homodimer. Within each dimer, one monomer is responsible for RNA recognition and catalysis, while the other monomer binds to the replacement base PreQ1. It depends on Zn(2+) as a cofactor.

The enzyme catalyses 7-aminomethyl-7-carbaguanine + guanosine(34) in tRNA = 7-aminomethyl-7-carbaguanosine(34) in tRNA + guanine. It participates in tRNA modification; tRNA-queuosine biosynthesis. Functionally, catalyzes the base-exchange of a guanine (G) residue with the queuine precursor 7-aminomethyl-7-deazaguanine (PreQ1) at position 34 (anticodon wobble position) in tRNAs with GU(N) anticodons (tRNA-Asp, -Asn, -His and -Tyr). Catalysis occurs through a double-displacement mechanism. The nucleophile active site attacks the C1' of nucleotide 34 to detach the guanine base from the RNA, forming a covalent enzyme-RNA intermediate. The proton acceptor active site deprotonates the incoming PreQ1, allowing a nucleophilic attack on the C1' of the ribose to form the product. After dissociation, two additional enzymatic reactions on the tRNA convert PreQ1 to queuine (Q), resulting in the hypermodified nucleoside queuosine (7-(((4,5-cis-dihydroxy-2-cyclopenten-1-yl)amino)methyl)-7-deazaguanosine). The sequence is that of Queuine tRNA-ribosyltransferase from Dehalococcoides mccartyi (strain CBDB1).